The chain runs to 103 residues: uncharacterized protein (103 aa).

The region spanning 12–88 (ADPAAFDEHY…AAADVANFAS (77 aa)) is the EthD domain.

This is an uncharacterized protein from Rhodococcus erythropolis (Arthrobacter picolinophilus).